We begin with the raw amino-acid sequence, 695 residues long: Cysteine-rich receptor-like protein kinase 6 (695 aa).

The signal sequence occupies residues 1–31 (MRRHRPYLDGVAAAAATFLLAVLLHAPLAAG). The Extracellular segment spans residues 32-294 (EDEPPPWVLC…ATSGEKTKNR (263 aa)). 2 Gnk2-homologous domains span residues 38 to 142 (WVLC…NRDF) and 151 to 261 (TTYT…VFPF). Asn49, Asn53, Asn70, and Asn101 each carry an N-linked (GlcNAc...) asparagine glycan. 2 disulfide bridges follow: Cys96-Cys105 and Cys108-Cys133. Asn178 carries an N-linked (GlcNAc...) asparagine glycan. 2 cysteine pairs are disulfide-bonded: Cys215–Cys224 and Cys227–Cys252. The chain crosses the membrane as a helical span at residues 295–315 (IGTVLAIVMPAIAAILLMVVA). The Cytoplasmic portion of the chain corresponds to 316 to 695 (CFCCWKRIKK…DLSITELVPR (380 aa)). A Protein kinase domain is found at 363–634 (FADTKMIGQG…PTISSVNIML (272 aa)). ATP contacts are provided by residues 369–377 (IGQGGFGMV) and Lys391. Asp488 acts as the Proton acceptor in catalysis. The interval 658–682 (DSSNPYSERYPRPRHSGYSDNSTVV) is disordered.

The protein belongs to the protein kinase superfamily. Ser/Thr protein kinase family. CRK subfamily.

It is found in the membrane. Its function is as follows. Involved in disease resistance. Required for NPR1/NH1-mediated immunity to the bacterial blight pathogen Xanthomomas oryzae pv. oryzae (Xoo). Required for the benzothiadiazole (BTH)-induced immune response. Possesses kinase activity in vitro. The protein is Cysteine-rich receptor-like protein kinase 6 of Oryza sativa subsp. japonica (Rice).